Reading from the N-terminus, the 144-residue chain is Deoxyuridine 5'-triphosphate nucleotidohydrolase (144 aa).

Residues S66, R133, F138, and G139 each contribute to the dUMP site.

Belongs to the dUTPase family. Homotrimer. Requires Mg(2+) as cofactor.

It carries out the reaction dUTP + H2O = dUMP + diphosphate + H(+). It functions in the pathway pyrimidine metabolism; dUMP biosynthesis; dUMP from dCTP (dUTP route): step 2/2. Its function is as follows. Involved in nucleotide metabolism via production of dUMP, the immediate precursor of thymidine nucleotides, and decreases the intracellular concentration of dUTP so that uracil cannot be incorporated into DNA. This chain is Deoxyuridine 5'-triphosphate nucleotidohydrolase (DUT1), found in Encephalitozoon cuniculi (strain GB-M1) (Microsporidian parasite).